Here is a 236-residue protein sequence, read N- to C-terminus: (5-formylfuran-3-yl)methyl phosphate synthase (236 aa).

The Schiff-base intermediate with substrate role is filled by Lys27. Lys85 functions as the Proton acceptor in the catalytic mechanism.

This sequence belongs to the MfnB family.

The catalysed reaction is 2 D-glyceraldehyde 3-phosphate = 4-(hydroxymethyl)-2-furancarboxaldehyde phosphate + phosphate + 2 H2O. It participates in cofactor biosynthesis; methanofuran biosynthesis. Its function is as follows. Catalyzes the formation of 4-(hydroxymethyl)-2-furancarboxaldehyde phosphate (4-HFC-P) from two molecules of glyceraldehyde-3-P (GA-3-P). This is (5-formylfuran-3-yl)methyl phosphate synthase from Methanococcus maripaludis (strain C6 / ATCC BAA-1332).